Consider the following 626-residue polypeptide: Putative ankyrin repeat protein R837 (626 aa).

ANK repeat units follow at residues 42–72 (EYFN…GLIR), 80–109 (TLNT…NHRY), 110–139 (SEDK…NIKS), 140–169 (RNNY…DITV), 171–199 (DYEV…DIKK), 201–230 (NKKR…DVYR), 242–269 (KNYK…YQLS), 270–298 (DTNN…LHEL), 299–328 (NLNQ…DINT), 330–358 (GNSC…RLTS), 393–416 (TIMS…KSSL), 417–446 (DYES…ITKQ), 452–479 (INNS…GINI), 480–509 (CINY…NINE), 510–539 (FGDL…NIYI), 540–569 (IKDN…DYHK), 570–599 (KNEL…KTKT), and 601–626 (FFDP…NEIK).

The polypeptide is Putative ankyrin repeat protein R837 (Acanthamoeba polyphaga (Amoeba)).